A 20-amino-acid polypeptide reads, in one-letter code: GLLASLGKVLGGYLAEKLKP.

Expressed by the skin dorsal glands.

The protein resides in the secreted. In terms of biological role, has no antimicrobial activity. Strongly inhibits the formation of NO by neuronal nitric oxide synthase at micromolar concentrations. This is Dahlein-5.3 from Ranoidea dahlii (Dahl's aquatic frog).